The sequence spans 758 residues: UPF0313 protein CV_1738 (758 aa).

The 266-residue stretch at 377 to 642 (AWEMIKYSVN…VDVVRDGYRR (266 aa)) folds into the Radical SAM core domain. [4Fe-4S] cluster is bound by residues Cys391, Cys395, and Cys398. The segment at 698–758 (GAPMNRGKSP…KPGGKTSRSR (61 aa)) is disordered. Residues 727 to 737 (RGQGGQGGRPG) show a composition bias toward gly residues.

Belongs to the UPF0313 family. It depends on [4Fe-4S] cluster as a cofactor.

This is UPF0313 protein CV_1738 from Chromobacterium violaceum (strain ATCC 12472 / DSM 30191 / JCM 1249 / CCUG 213 / NBRC 12614 / NCIMB 9131 / NCTC 9757 / MK).